Reading from the N-terminus, the 149-residue chain is D-aminoacyl-tRNA deacylase (149 aa).

The short motif at Gly137 to Pro138 is the Gly-cisPro motif, important for rejection of L-amino acids element.

This sequence belongs to the DTD family. Homodimer.

The protein localises to the cytoplasm. It carries out the reaction glycyl-tRNA(Ala) + H2O = tRNA(Ala) + glycine + H(+). The catalysed reaction is a D-aminoacyl-tRNA + H2O = a tRNA + a D-alpha-amino acid + H(+). In terms of biological role, an aminoacyl-tRNA editing enzyme that deacylates mischarged D-aminoacyl-tRNAs. Also deacylates mischarged glycyl-tRNA(Ala), protecting cells against glycine mischarging by AlaRS. Acts via tRNA-based rather than protein-based catalysis; rejects L-amino acids rather than detecting D-amino acids in the active site. By recycling D-aminoacyl-tRNA to D-amino acids and free tRNA molecules, this enzyme counteracts the toxicity associated with the formation of D-aminoacyl-tRNA entities in vivo and helps enforce protein L-homochirality. This chain is D-aminoacyl-tRNA deacylase, found in Clostridium botulinum (strain Alaska E43 / Type E3).